Consider the following 186-residue polypeptide: Methylamine dehydrogenase light chain (186 aa).

The segment at residues 1–57 (MLGKSQFDDLFEKMSRKVAGHTSRRGFIGRVGTAVAGVALVPLLPVDRRGRVSRANA) is a signal peptide (tat-type signal). 6 disulfides stabilise this stretch: cysteine 78–cysteine 143, cysteine 84–cysteine 116, cysteine 91–cysteine 176, cysteine 93–cysteine 141, cysteine 101–cysteine 132, and cysteine 133–cysteine 164. Tryptophylquinone is present on tryptophan 112. Residues 112 to 163 (WVASCYNPTDKQSYLISYRDCCGANVSGRCACLNTEGELPVYRPEFGNDIIW) constitute a cross-link (tryptophan tryptophylquinone (Trp-Trp)).

The protein belongs to the aromatic amine dehydrogenase light chain family. Heterotetramer of two light and two heavy chains. Requires tryptophan tryptophylquinone residue as cofactor. Post-translationally, predicted to be exported by the Tat system. The position of the signal peptide cleavage has been experimentally proven. Tryptophan tryptophylquinone (TTQ) is formed by oxidation of the indole ring of a tryptophan to form tryptophylquinone followed by covalent cross-linking with another tryptophan residue.

Its subcellular location is the periplasm. The catalysed reaction is 2 oxidized [amicyanin] + methylamine + H2O = 2 reduced [amicyanin] + formaldehyde + NH4(+) + 2 H(+). Its pathway is one-carbon metabolism; methylamine degradation; formaldehyde from methylamine: step 1/1. Functionally, methylamine dehydrogenase carries out the oxidation of methylamine. Electrons are passed from methylamine dehydrogenase to amicyanin. The protein is Methylamine dehydrogenase light chain (mauA) of Methylorubrum extorquens (strain ATCC 14718 / DSM 1338 / JCM 2805 / NCIMB 9133 / AM1) (Methylobacterium extorquens).